The sequence spans 486 residues: MSHFLPTLILTSLTLVAYVLARMIYNVFYHPLSAFPGDAFFCATGLTKAYHMIAGDLQLKVKDMHDKYGSVVRIAPTELSFSYCSAWKDIYGSRGGRELSKFYDFYRVDEAMPQHIISAGKAKHSILRRYLAHGFSENAMKAQEPVILDLVNLLMQRLREHAEEGARVVDVNKWFNFATFEIIGKLTFGADLGNLRNRDWHPWVKGSANNNMVVGFMAAANSVGLGPIIKWCISNEILPRQKYLDELAEMVQKRTGVTVERPDFIQGLLRDDVQLSNGEIVANVEALIGAGSESTATLLTGTVCALLQNPDQLAKVIDEVRSTFRTEDEITLHSVQRLDYMLACLNETFRYYPPVTNGMPRVTPKEGAIIGGRLVPGNTVVAIWQWAICHDPALWKDPYTFRPERFLEAPEFSTDVREALNPFSVGTRNCIGRNLSYAETRLILARLFYYFDLELADPDQDWFGAQKAYLVWDAPALNMYLKPVVR.

The N-terminal stretch at 1-21 is a signal peptide; it reads MSHFLPTLILTSLTLVAYVLA. N346 carries an N-linked (GlcNAc...) asparagine glycan. Heme is bound at residue C430. An N-linked (GlcNAc...) asparagine glycan is attached at N434.

It belongs to the cytochrome P450 family. Heme serves as cofactor.

The protein operates within mycotoxin biosynthesis. Its function is as follows. Cytochrome P450 monooxygenase; part of the gene cluster that mediates the biosynthesis of aphidicolin, a specific inhibitor of eukaryotic DNA synthesis and DNA polymerase alpha. The geranylgeranyl pyrophosphate synthase GGS is required for supplying a sufficient amount of geranylgeranyl diphosphate (GGDP), the general precursor of diterpenes. The diterpene synthase ACS then catalyzes the conversion of geranylgeranyl diphosphate to aphidicolan-16-beta-ol via the intermediate syn-copalyldiphosphate (syn-CDP). In addition to aphidicolan-16-beta-ol, the enzyme also produces low levels of amphidicol-15-ene and amphidicol-16-ene. The cytochrome P450 monooxygenase P450-2 then catalyzes the two-step hydroxylation from aphidicolan-16-beta-ol to 3-deoxyaphidicolin via a 17,3-deoxyaphidicolin intermediate. Finally, the cytochrome P450 monooxygenase P450-1 converts 3-deoxyaphidicolin to aphidicolin. The protein is Cytochrome P450 monooxygenase 1 (PbP450-1) of Neocamarosporium betae (Beet black rot fungus).